The following is a 256-amino-acid chain: Myb family transcription factor MPH1 (256 aa).

One can recognise an HTH myb-type domain in the interval 14–74 (RSEVPRMRWT…HLQMYRSGSS (61 aa)). Residues 45–70 (PKRILQLMGVKGVSISHIKSHLQMYR) constitute a DNA-binding region (H-T-H motif).

In terms of tissue distribution, highly expressed in the pulvinus and stem nodes. Expressed in the plumule of germinating seeds, coleoptile, leaves, internodes, leave sheaths, spikes and roots.

Its subcellular location is the nucleus. Functionally, probable transcription factor involved in the regulation of plant height by elongating internode cell length. Involved in the positive regulation of grain yield. May be involved in the regulation of genes related to cell elongation and cell wall synthesis, which are associated with plant height and yield phenotypes. Plays a role in tolerance to cadmium stress. This is Myb family transcription factor MPH1 from Oryza sativa subsp. japonica (Rice).